We begin with the raw amino-acid sequence, 204 residues long: Protein GET1 (204 aa).

The Lumenal portion of the chain corresponds to 1–4 (MPSL). The helical transmembrane segment at 5–24 (LLIIFVTELVVQLVNTLGAT) threads the bilayer. The Cytoplasmic segment spans residues 25 to 110 (TINDLLWRIY…KFDRTLTTTR (86 aa)). A coiled-coil region spans residues 72–107 (AKWAKLRRQHDKLLEDLEKKKASLEAARTKFDRTLT). The chain crosses the membrane as a helical span at residues 111–131 (TVSTRSVQWFLPFWYSKEPMF). The Lumenal segment spans residues 132–155 (WLPYGWFPYYVEWFASFPRAPMGS). The helical transmembrane segment at 156-172 (VSIVVWQWACTAVIALM) threads the bilayer. Topologically, residues 173 to 204 (IEAATAALVYVAAKQSQKIRQPVPAQSEKKDS) are cytoplasmic.

This sequence belongs to the WRB/GET1 family. As to quaternary structure, interacts with GET3.

It is found in the endoplasmic reticulum membrane. Functionally, required for the post-translational delivery of tail-anchored (TA) proteins to the endoplasmic reticulum. Acts as a membrane receptor for soluble GET3, which recognizes and selectively binds the transmembrane domain of TA proteins in the cytosol. The chain is Protein GET1 from Podospora anserina (strain S / ATCC MYA-4624 / DSM 980 / FGSC 10383) (Pleurage anserina).